Consider the following 186-residue polypeptide: ATP synthase subunit delta (186 aa).

This sequence belongs to the ATPase delta chain family. In terms of assembly, F-type ATPases have 2 components, F(1) - the catalytic core - and F(0) - the membrane proton channel. F(1) has five subunits: alpha(3), beta(3), gamma(1), delta(1), epsilon(1). F(0) has three main subunits: a(1), b(2) and c(10-14). The alpha and beta chains form an alternating ring which encloses part of the gamma chain. F(1) is attached to F(0) by a central stalk formed by the gamma and epsilon chains, while a peripheral stalk is formed by the delta and b chains.

The protein resides in the cell inner membrane. Its function is as follows. F(1)F(0) ATP synthase produces ATP from ADP in the presence of a proton or sodium gradient. F-type ATPases consist of two structural domains, F(1) containing the extramembraneous catalytic core and F(0) containing the membrane proton channel, linked together by a central stalk and a peripheral stalk. During catalysis, ATP synthesis in the catalytic domain of F(1) is coupled via a rotary mechanism of the central stalk subunits to proton translocation. This protein is part of the stalk that links CF(0) to CF(1). It either transmits conformational changes from CF(0) to CF(1) or is implicated in proton conduction. The chain is ATP synthase subunit delta from Leptospira interrogans serogroup Icterohaemorrhagiae serovar copenhageni (strain Fiocruz L1-130).